Consider the following 130-residue polypeptide: Ribosome-binding factor A (130 aa).

This sequence belongs to the RbfA family. Monomer. Binds 30S ribosomal subunits, but not 50S ribosomal subunits or 70S ribosomes.

Its subcellular location is the cytoplasm. Its function is as follows. One of several proteins that assist in the late maturation steps of the functional core of the 30S ribosomal subunit. Associates with free 30S ribosomal subunits (but not with 30S subunits that are part of 70S ribosomes or polysomes). Required for efficient processing of 16S rRNA. May interact with the 5'-terminal helix region of 16S rRNA. The polypeptide is Ribosome-binding factor A (Lachnospira eligens (strain ATCC 27750 / DSM 3376 / VPI C15-48 / C15-B4) (Eubacterium eligens)).